Reading from the N-terminus, the 130-residue chain is Small ribosomal subunit protein uS8 (130 aa).

Belongs to the universal ribosomal protein uS8 family. In terms of assembly, part of the 30S ribosomal subunit.

Its function is as follows. One of the primary rRNA binding proteins, it binds directly to 16S rRNA central domain where it helps coordinate assembly of the platform of the 30S subunit. This Methanotorris igneus (Methanococcus igneus) protein is Small ribosomal subunit protein uS8.